The following is a 480-amino-acid chain: RuvB-like helicase 2 (480 aa).

ATP is bound at residue 73–80 (GEPSTGKT).

The protein belongs to the RuvB family. As to quaternary structure, forms homohexameric rings. May form a dodecamer with rept made of two stacked hexameric rings. Component of the chromatin remodeling Ino80 complex.

It is found in the nucleus. The catalysed reaction is ATP + H2O = ADP + phosphate + H(+). Its function is as follows. Acts as a transcriptional coactivator in Wg signaling caused by altered arm signaling. Pont and rept interfere antagonistically with nuclear arm signaling function, and are required to enhance or reduce arm activity, respectively. Also an essential cofactor for the normal function of Myc; required for cellular proliferation and growth. In terms of biological role, proposed core component of the chromatin remodeling Ino80 complex which is involved in transcriptional regulation, DNA replication and probably DNA repair. The sequence is that of RuvB-like helicase 2 from Drosophila pseudoobscura pseudoobscura (Fruit fly).